A 143-amino-acid polypeptide reads, in one-letter code: Hemoglobin subunit alpha-A (143 aa).

In terms of domain architecture, Globin spans 2–143 (SLSGKDKSVV…LALALAERYR (142 aa)). H60 contacts O2. H89 contacts heme b.

It belongs to the globin family. Heterotetramer of two alpha chains and two beta chains. In terms of tissue distribution, red blood cells.

Its function is as follows. Involved in oxygen transport from gills to the various peripheral tissues. In Seriola quinqueradiata (Five-ray yellowtail), this protein is Hemoglobin subunit alpha-A (hbaa).